A 55-amino-acid chain; its full sequence is Large ribosomal subunit protein bL33 (55 aa).

It belongs to the bacterial ribosomal protein bL33 family.

The sequence is that of Large ribosomal subunit protein bL33 from Brucella abortus (strain S19).